Here is a 645-residue protein sequence, read N- to C-terminus: Chaperone protein DnaK (645 aa).

Position 201 is a phosphothreonine; by autocatalysis (Thr-201). A compositionally biased stretch (low complexity) spans 606–629 (NTNNATAGDNNTTDTGSSSNSDGS). Residues 606 to 645 (NTNNATAGDNNTTDTGSSSNSDGSKVVDSDYQEIDKKDGK) form a disordered region. Over residues 630 to 645 (KVVDSDYQEIDKKDGK) the composition is skewed to basic and acidic residues.

Belongs to the heat shock protein 70 family.

Functionally, acts as a chaperone. The sequence is that of Chaperone protein DnaK from Ehrlichia ruminantium (strain Welgevonden).